The following is a 234-amino-acid chain: Glucosamine-6-phosphate deaminase (234 aa).

Asp-62 (proton acceptor; for enolization step) is an active-site residue. Residue Asn-128 is the For ring-opening step of the active site. His-130 (proton acceptor; for ring-opening step) is an active-site residue. Glu-135 acts as the For ring-opening step in catalysis.

It belongs to the glucosamine/galactosamine-6-phosphate isomerase family. NagB subfamily.

It catalyses the reaction alpha-D-glucosamine 6-phosphate + H2O = beta-D-fructose 6-phosphate + NH4(+). Its pathway is amino-sugar metabolism; N-acetylneuraminate degradation; D-fructose 6-phosphate from N-acetylneuraminate: step 5/5. In terms of biological role, catalyzes the reversible isomerization-deamination of glucosamine 6-phosphate (GlcN6P) to form fructose 6-phosphate (Fru6P) and ammonium ion. The protein is Glucosamine-6-phosphate deaminase of Streptococcus equi subsp. equi (strain 4047).